We begin with the raw amino-acid sequence, 221 residues long: Interleukin-12 subunit alpha (221 aa).

The signal sequence occupies residues 1–25; that stretch reads MCPLRSLLLISTLVLLHHLPHLSLG. Cystine bridges form between C39–C112, C66–C198, and C87–C125. Residue N95 is glycosylated (N-linked (GlcNAc...) asparagine).

Belongs to the IL-6 superfamily. In terms of assembly, heterodimer with IL12B; disulfide-linked. This heterodimer is known as interleukin IL-12. Heterodimer with EBI3/IL27B; not disulfide-linked. This heterodimer is known as interleukin IL-35. Interacts with NBR1; this interaction promotes IL-12 secretion.

The protein resides in the secreted. In terms of biological role, heterodimerizes with IL12B to form the IL-12 cytokine or with EBI3/IL27B to form the IL-35 cytokine. IL-12 is primarily produced by professional antigen-presenting cells (APCs) such as B-cells and dendritic cells (DCs) as well as macrophages and granulocytes and regulates T-cell and natural killer-cell responses, induces the production of interferon-gamma (IFN-gamma), favors the differentiation of T-helper 1 (Th1) cells and is an important link between innate resistance and adaptive immunity. Mechanistically, exerts its biological effects through a receptor composed of IL12R1 and IL12R2 subunits. Binding to the receptor results in the rapid tyrosine phosphorylation of a number of cellular substrates including the JAK family kinases TYK2 and JAK2. In turn, recruited STAT4 gets phosphorylated and translocates to the nucleus where it regulates cytokine/growth factor responsive genes. As part of IL-35, plays essential roles in maintaining the immune homeostasis of the liver microenvironment and also functions as an immune-suppressive cytokine. Mediates biological events through unconventional receptors composed of IL12RB2 and gp130/IL6ST heterodimers or homodimers. Signaling requires the transcription factors STAT1 and STAT4, which form a unique heterodimer that binds to distinct DNA sites. The polypeptide is Interleukin-12 subunit alpha (IL12A) (Bubalus carabanensis (Swamp type water buffalo)).